Here is a 977-residue protein sequence, read N- to C-terminus: Fc receptor-like protein 5 (977 aa).

The N-terminal stretch at 1–15 (MLLWVILLVLAPVSG) is a signal peptide. Residues 16-851 (QFARTPRPII…ANRSGPFATG (836 aa)) lie on the Extracellular side of the membrane. 8 consecutive Ig-like C2-type domains span residues 23-101 (PIIF…LDFS), 188-271 (PFTR…SVIS), 287-374 (PVLT…LSVT), 380-463 (PVLN…KAVS), 473-556 (PVLT…EVVS), 566-651 (PILT…ISLS), 659-744 (PILT…VTLK), and 752-834 (PVLT…ETVT). Cystine bridges form between cysteine 44–cysteine 85, cysteine 211–cysteine 260, and cysteine 308–cysteine 355. N-linked (GlcNAc...) asparagine glycosylation occurs at asparagine 383. Intrachain disulfides connect cysteine 401/cysteine 448, cysteine 494/cysteine 541, cysteine 587/cysteine 634, cysteine 680/cysteine 727, and cysteine 773/cysteine 819. The helical transmembrane segment at 852–872 (VAGGLLSIAGLAAGALLLYCW) threads the bilayer. Residues 873-977 (LSRKAGRKPA…LFLASSAPHR (105 aa)) are Cytoplasmic-facing. The disordered stretch occupies residues 879–898 (RKPASDPARSPSDSDSQEPT). A compositionally biased stretch (low complexity) spans 883-892 (SDPARSPSDS). 4 consecutive short sequence motifs (ITIM motif) follow at residues 897–902 (PTYHNV), 910–915 (PVYTNA), 922–927 (VVYSEV), and 952–957 (IIYSEV).

As to quaternary structure, interacts with CR2. Interacts with CD19. In terms of tissue distribution, expressed in marginal zone B-cells, immunoblasts, tonsillar germinal center centrocytes and in the intraepithelial and interfollicular regions of the tonsil. Expressed in many lymphoma cell lines and on hairy cell leukemia cells. Isoform 1, isoform 3, isoform 4 and isoform 5 are detected in lymph node, spleen, bone marrow, and small intestine with preponderance of isoform 3. Expressed in mature and memory B-cells and down-regulated in germinal center cells (at protein level).

Its subcellular location is the cell membrane. Its function is as follows. Plays an important role in B-cell response to antigen that acts both as a negative or positive coreceptor. Inhibits B-cell receptor (BCR) signaling in the absence of CR2 stimulation but engagement with CR2 and the BCR lead to a superior calcium response compared to CR2 and BCR costimulation. May be involved in B-cell development and differentiation in peripheral lymphoid organs and may be useful markers of B-cell stages. May have an immunoregulatory role in marginal zone B-cells. May play a role in fertilization. This is Fc receptor-like protein 5 (FCRL5) from Homo sapiens (Human).